Here is a 368-residue protein sequence, read N- to C-terminus: 2-aminoethylphosphonate--pyruvate transaminase (368 aa).

Residue Lys192 is modified to N6-(pyridoxal phosphate)lysine.

The protein belongs to the class-V pyridoxal-phosphate-dependent aminotransferase family. PhnW subfamily. Homodimer. Requires pyridoxal 5'-phosphate as cofactor.

It carries out the reaction (2-aminoethyl)phosphonate + pyruvate = phosphonoacetaldehyde + L-alanine. Functionally, involved in phosphonate degradation. In Pseudomonas putida (strain GB-1), this protein is 2-aminoethylphosphonate--pyruvate transaminase.